The sequence spans 142 residues: Hemoglobin A subunit alpha-1 (142 aa).

A Globin domain is found at 2-142; that stretch reads VLTAGDKANV…VATALTSKYR (141 aa). His59 is a binding site for O2. Position 88 (His88) interacts with heme b.

This sequence belongs to the globin family. In terms of assembly, tetramer of alpha-1, alpha-2 and two identical beta chains. As to expression, red blood cells.

Functionally, involved in oxygen transport from the lung to the various peripheral tissues. This Aldabrachelys gigantea (Aldabra giant tortoise) protein is Hemoglobin A subunit alpha-1.